The sequence spans 380 residues: Cytochrome b (380 aa).

Transmembrane regions (helical) follow at residues 33–53, 77–98, 113–133, and 178–198; these read FGSL…FLAM, WLIR…YLHV, WNIG…GYVL, and FFAF…IHLL. Heme b is bound by residues H83 and H97. 2 residues coordinate heme b: H182 and H196. A ubiquinone is bound at residue H201. The next 4 membrane-spanning stretches (helical) occupy residues 226 to 246, 288 to 308, 320 to 340, and 347 to 367; these read YKDM…TLFT, LGGV…PILH, ITQM…WIGG, and FMTI…ILIP.

Belongs to the cytochrome b family. In terms of assembly, the cytochrome bc1 complex contains 3 respiratory subunits (MT-CYB, CYC1 and UQCRFS1), 2 core proteins (UQCRC1 and UQCRC2) and probably 6 low-molecular weight proteins. The cofactor is heme b.

The protein resides in the mitochondrion inner membrane. Functionally, component of the ubiquinol-cytochrome c reductase complex (complex III or cytochrome b-c1 complex) that is part of the mitochondrial respiratory chain. The b-c1 complex mediates electron transfer from ubiquinol to cytochrome c. Contributes to the generation of a proton gradient across the mitochondrial membrane that is then used for ATP synthesis. This Latimeria chalumnae (Coelacanth) protein is Cytochrome b (mt-cyb).